A 102-amino-acid polypeptide reads, in one-letter code: MLEHLSSLPTQMDYKGQKLAEQMFQGIILFSAIVGFIYGYVAEQFGWTVYIVMAGFAFSCLLTLPPWPIYRRHPLKWLPVQDSGSEDKKPGERKIKRHAKNN.

The Cytoplasmic segment spans residues 1–26 (MLEHLSSLPTQMDYKGQKLAEQMFQG). Residues 27–47 (IILFSAIVGFIYGYVAEQFGW) traverse the membrane as a helical segment. Position 48 (Thr48) is a topological domain, lumenal. Residues 49–69 (VYIVMAGFAFSCLLTLPPWPI) form a helical membrane-spanning segment. At 70–102 (YRRHPLKWLPVQDSGSEDKKPGERKIKRHAKNN) the chain is on the cytoplasmic side. The interval 81-102 (QDSGSEDKKPGERKIKRHAKNN) is disordered.

It belongs to the SPCS1 family. As to quaternary structure, component of the signal peptidase complex paralog A (SPC-A) composed of a catalytic subunit SEC11A and three accessory subunits SPCS1, SPCS2 and SPCS3. Component of the signal peptidase complex paralog C (SPC-C) composed of a catalytic subunit SEC11C and three accessory subunits SPCS1, SPCS2 and SPCS3. Within the complex, interacts with SPCS2 and SPCS3. The complex induces a local thinning of the ER membrane which is used to measure the length of the signal peptide (SP) h-region of protein substrates. This ensures the selectivity of the complex towards h-regions shorter than 18-20 amino acids. In terms of processing, may be phosphorylated. In terms of tissue distribution, expressed in the pancreas (at protein level).

The protein resides in the endoplasmic reticulum membrane. Functionally, component of the signal peptidase complex (SPC) which catalyzes the cleavage of N-terminal signal sequences from nascent proteins as they are translocated into the lumen of the endoplasmic reticulum. Dispensable for SPC enzymatic activity. The chain is Signal peptidase complex subunit 1 (SPCS1) from Canis lupus familiaris (Dog).